The chain runs to 1162 residues: Enhanced level of genomic instability 1 (1162 aa).

Disordered stretches follow at residues 1–136, 144–163, 179–202, 249–319, 348–380, 611–634, and 666–697; these read MTDV…ADNQ, KAGK…KPKP, LGVN…ATPT, KTDA…TKKR, METP…RRSC, RSME…PNGE, and WSGN…SSSN. Positions 65-78 are enriched in basic residues; that stretch reads KQKHREKHKRKREE. Positions 79–111 are enriched in basic and acidic residues; that stretch reads KRRAALMEDQKSTTEEVKANAKEKPQPLREKSS. Residues 125 to 136 are compositionally biased toward polar residues; that stretch reads PLKSSTPVADNQ. Basic residues predominate over residues 268–278; it reads KRLRGRPRSRR. Low complexity-rich tracts occupy residues 666–676 and 684–697; these read WSGNGGSNRNS and DMSN…SSSN. 703–710 serves as a coordination point for ATP; that stretch reads GPSSSGKT. 2 disordered regions span residues 900 to 923 and 975 to 1008; these read GDST…SRLA and QAAG…SDGH. The span at 984-993 shows a compositional bias: basic residues; the sequence is AAKRKSRSPK. Polar residues predominate over residues 998–1008; it reads SSATGQKSDGH.

Belongs to the ELG1 family. As to quaternary structure, component of a heteropentameric Elg1 RFC-like complex composed of one large subunit (elg1) and four small subunits (RfC4, RfC38, CG8142 and RfC3). As part of the complex, might interact with the Enok complex, composed of enok, Br140, Eaf6 and Ing5. Within the Enok complex, interacts directly with Br140. In terms of tissue distribution, expressed at higher levels in the germline nurse cells than in the somatic follicle cells.

Its subcellular location is the nucleus. Has an important role in DNA replication and in maintaining genome integrity during replication stress. Promotes PCNA deubiquitination. As component of the Elg1 RFC-like complex, regulates the functions of the DNA polymerase processivity factor PCNA by unloading it from DNA after replication during the S phase of the cell cycle. The PCNA-unloading might be regulated via interaction with the Enok acetyltransferase complex. Might have a role in restarting of stalled/regressed replication forks during replication stress. In the ovaries, has a role in nurse cell endoreplication. This chain is Enhanced level of genomic instability 1, found in Drosophila melanogaster (Fruit fly).